The primary structure comprises 300 residues: Bifunctional protein FolD (300 aa).

NADP(+)-binding positions include 169-171 and Ile235; that span reads GHS.

Belongs to the tetrahydrofolate dehydrogenase/cyclohydrolase family. As to quaternary structure, homodimer.

The enzyme catalyses (6R)-5,10-methylene-5,6,7,8-tetrahydrofolate + NADP(+) = (6R)-5,10-methenyltetrahydrofolate + NADPH. The catalysed reaction is (6R)-5,10-methenyltetrahydrofolate + H2O = (6R)-10-formyltetrahydrofolate + H(+). It functions in the pathway one-carbon metabolism; tetrahydrofolate interconversion. Catalyzes the oxidation of 5,10-methylenetetrahydrofolate to 5,10-methenyltetrahydrofolate and then the hydrolysis of 5,10-methenyltetrahydrofolate to 10-formyltetrahydrofolate. In Rhodobacter capsulatus (strain ATCC BAA-309 / NBRC 16581 / SB1003), this protein is Bifunctional protein FolD.